A 391-amino-acid chain; its full sequence is Formate-dependent phosphoribosylglycinamide formyltransferase (391 aa).

N(1)-(5-phospho-beta-D-ribosyl)glycinamide is bound by residues 20 to 21 and glutamate 80; that span reads EL. ATP-binding positions include arginine 112, lysine 153, 158-163, 193-196, and glutamate 201; these read SSGKGQ and EGFV. The region spanning 117–306 is the ATP-grasp domain; the sequence is RLAAETLGLP…EFALHVRAIL (190 aa). Mg(2+)-binding residues include glutamate 265 and glutamate 277. N(1)-(5-phospho-beta-D-ribosyl)glycinamide contacts are provided by residues aspartate 284, lysine 354, and 361–362; that span reads RR.

This sequence belongs to the PurK/PurT family. In terms of assembly, homodimer.

It carries out the reaction N(1)-(5-phospho-beta-D-ribosyl)glycinamide + formate + ATP = N(2)-formyl-N(1)-(5-phospho-beta-D-ribosyl)glycinamide + ADP + phosphate + H(+). Its pathway is purine metabolism; IMP biosynthesis via de novo pathway; N(2)-formyl-N(1)-(5-phospho-D-ribosyl)glycinamide from N(1)-(5-phospho-D-ribosyl)glycinamide (formate route): step 1/1. Its function is as follows. Involved in the de novo purine biosynthesis. Catalyzes the transfer of formate to 5-phospho-ribosyl-glycinamide (GAR), producing 5-phospho-ribosyl-N-formylglycinamide (FGAR). Formate is provided by PurU via hydrolysis of 10-formyl-tetrahydrofolate. The protein is Formate-dependent phosphoribosylglycinamide formyltransferase of Shewanella putrefaciens (strain CN-32 / ATCC BAA-453).